Here is a 101-residue protein sequence, read N- to C-terminus: Small ribosomal subunit protein uS10 (101 aa).

The protein belongs to the universal ribosomal protein uS10 family. In terms of assembly, part of the 30S ribosomal subunit.

In terms of biological role, involved in the binding of tRNA to the ribosomes. This chain is Small ribosomal subunit protein uS10, found in Corynebacterium urealyticum (strain ATCC 43042 / DSM 7109).